The sequence spans 257 residues: MKFRGKVARYISEILEEGKTLHFSLFDPDKIFDLDSLHDIASKLIEAGTDVFLIGGTLGISQDKLDNILSILEEFSIPLIIFPSNVNLISNKADAILFLSLLNSDDLYYIVGAQIVAAPIIKRIGLEVLPTAYLIIGHGGTAGHIGRARVIPYDNIELIVSYSLAANYMGMKYIYLEAGSGASETVKPEAIKVVKNTVKDGVVIVGGGVTSEERARNLVLAGADIIVTGNVIERDHQKALKIIKEIKSIRRTSNAIK.

Positions 27 and 57 each coordinate Mg(2+). Sn-glycerol 1-phosphate contacts are provided by residues 175–181 (YLEAGSG), 207–208 (GG), and 229–230 (GN).

It belongs to the GGGP/HepGP synthase family. Group II subfamily. The cofactor is Mg(2+).

The protein resides in the cytoplasm. The catalysed reaction is sn-glycerol 1-phosphate + (2E,6E,10E)-geranylgeranyl diphosphate = sn-3-O-(geranylgeranyl)glycerol 1-phosphate + diphosphate. Its pathway is membrane lipid metabolism; glycerophospholipid metabolism. Prenyltransferase that catalyzes the transfer of the geranylgeranyl moiety of geranylgeranyl diphosphate (GGPP) to the C3 hydroxyl of sn-glycerol-1-phosphate (G1P). This reaction is the first ether-bond-formation step in the biosynthesis of archaeal membrane lipids. The protein is Geranylgeranylglyceryl phosphate synthase of Sulfolobus acidocaldarius (strain ATCC 33909 / DSM 639 / JCM 8929 / NBRC 15157 / NCIMB 11770).